A 493-amino-acid chain; its full sequence is Glycerol kinase (493 aa).

Thr11 provides a ligand contact to ADP. ATP-binding residues include Thr11, Thr12, and Ser13. Thr11 provides a ligand contact to sn-glycerol 3-phosphate. Position 15 (Arg15) interacts with ADP. Residues Arg80, Glu81, Tyr132, and Asp241 each coordinate sn-glycerol 3-phosphate. 5 residues coordinate glycerol: Arg80, Glu81, Tyr132, Asp241, and Gln242. ADP-binding residues include Thr263 and Gly306. Residues Thr263, Gly306, Gln310, and Gly408 each coordinate ATP. Gly408 is an ADP binding site.

Belongs to the FGGY kinase family.

It carries out the reaction glycerol + ATP = sn-glycerol 3-phosphate + ADP + H(+). Its pathway is polyol metabolism; glycerol degradation via glycerol kinase pathway; sn-glycerol 3-phosphate from glycerol: step 1/1. Inhibited by fructose 1,6-bisphosphate (FBP). Its function is as follows. Key enzyme in the regulation of glycerol uptake and metabolism. Catalyzes the phosphorylation of glycerol to yield sn-glycerol 3-phosphate. This Cereibacter sphaeroides (strain KD131 / KCTC 12085) (Rhodobacter sphaeroides) protein is Glycerol kinase.